The chain runs to 211 residues: Urease accessory protein UreF (211 aa).

It belongs to the UreF family. UreD, UreF and UreG form a complex that acts as a GTP-hydrolysis-dependent molecular chaperone, activating the urease apoprotein by helping to assemble the nickel containing metallocenter of UreC. The UreE protein probably delivers the nickel.

It localises to the cytoplasm. Required for maturation of urease via the functional incorporation of the urease nickel metallocenter. This chain is Urease accessory protein UreF, found in Mycobacterium sp. (strain JLS).